The chain runs to 334 residues: Protein-glutamate methylesterase FrzG (334 aa).

The CheB-type methylesterase domain occupies 147–334 (PYPLVAIAAS…AALMQWVDVC (188 aa)). Residues S156, H183, and D276 contribute to the active site.

It catalyses the reaction [protein]-L-glutamate 5-O-methyl ester + H2O = L-glutamyl-[protein] + methanol + H(+). In terms of biological role, probable methylesterase. Required for the normal aggregation of M.xanthus cells during fruiting body formation. It is also a component of a sensory transduction pathway that controls the frequency at which cells reverse their gliding direction. It may remove the methyl group from the gamma-glutamyl methyl ester residues in FrzCD. The chain is Protein-glutamate methylesterase FrzG (frzG) from Myxococcus xanthus.